Consider the following 251-residue polypeptide: CDP-diacylglycerol pyrophosphatase (251 aa).

A helical membrane pass occupies residues 4–24 (AGLLFLVMIVIAVVAAGIGYW).

It belongs to the Cdh family.

The protein localises to the cell inner membrane. It catalyses the reaction a CDP-1,2-diacyl-sn-glycerol + H2O = a 1,2-diacyl-sn-glycero-3-phosphate + CMP + 2 H(+). It functions in the pathway phospholipid metabolism; CDP-diacylglycerol degradation; phosphatidate from CDP-diacylglycerol: step 1/1. This Escherichia coli (strain SE11) protein is CDP-diacylglycerol pyrophosphatase.